The sequence spans 249 residues: Purine nucleoside phosphorylase ML0918 (249 aa).

Zn(2+) contacts are provided by His72, Cys109, and His126.

The protein belongs to the purine nucleoside phosphorylase YfiH/LACC1 family. As to quaternary structure, homodimer. It depends on Cu(2+) as a cofactor. Requires Zn(2+) as cofactor.

It carries out the reaction adenosine + phosphate = alpha-D-ribose 1-phosphate + adenine. The catalysed reaction is S-methyl-5'-thioadenosine + phosphate = 5-(methylsulfanyl)-alpha-D-ribose 1-phosphate + adenine. It catalyses the reaction inosine + phosphate = alpha-D-ribose 1-phosphate + hypoxanthine. The enzyme catalyses adenosine + H2O + H(+) = inosine + NH4(+). Functionally, purine nucleoside enzyme that catalyzes the phosphorolysis of adenosine and inosine nucleosides, yielding D-ribose 1-phosphate and the respective free bases, adenine and hypoxanthine. Also catalyzes the phosphorolysis of S-methyl-5'-thioadenosine into adenine and S-methyl-5-thio-alpha-D-ribose 1-phosphate. Also has adenosine deaminase activity. This is Purine nucleoside phosphorylase ML0918 from Mycobacterium leprae (strain TN).